The primary structure comprises 201 residues: Phosphatidylglycerophosphatase and protein-tyrosine phosphatase 1 (201 aa).

The transit peptide at 1–27 (MAATALLEAGLARVLFYPTLLYTLFRG) directs the protein to the mitochondrion. One can recognise a Tyrosine-protein phosphatase domain in the interval 37-188 (WYHRIDPTVL…LKEFHKQITA (152 aa)). Catalysis depends on C132, which acts as the Phosphocysteine intermediate.

This sequence belongs to the protein-tyrosine phosphatase family. Non-receptor class dual specificity subfamily. Interacts with STYXL1; the interaction inhibits PTPMT1 catalytic activity.

The protein resides in the mitochondrion inner membrane. It catalyses the reaction a 1,2-diacyl-sn-glycero-3-phospho-(1'-sn-glycero-3'-phosphate) + H2O = a 1,2-diacyl-sn-glycero-3-phospho-(1'-sn-glycerol) + phosphate. The enzyme catalyses O-phospho-L-tyrosyl-[protein] + H2O = L-tyrosyl-[protein] + phosphate. It carries out the reaction O-phospho-L-seryl-[protein] + H2O = L-seryl-[protein] + phosphate. The catalysed reaction is O-phospho-L-threonyl-[protein] + H2O = L-threonyl-[protein] + phosphate. It catalyses the reaction 1,2-di-(9Z-octadecenoyl)-sn-glycero-3-phospho-(1'-sn-glycerol-3'-phosphate) + H2O = 1,2-di-(9Z-octadecenoyl)-sn-glycero-3-phospho-(1'-sn-glycerol) + phosphate. The enzyme catalyses 1,2-dioctanoyl-sn-glycero-3-phospho-(1D-myo-inositol-5-phosphate) + H2O = 1,2-dioctanoyl-sn-glycero-3-phospho-(1D-myo-inositol) + phosphate. It carries out the reaction a 1-acyl-2-hexanoyl-sn-glycero-3-phospho-(1D-myo-inositol-5-phosphate) + H2O = a 1-acyl-2-hexanoyl-sn-glycero-3-phospho-(1D-myo-inositol) + phosphate. The catalysed reaction is 1,2-dibutyryl-sn-glycero-3-phospho-(1D-myo-inositol-5-phosphate) + H2O = 1,2-dibutyryl-sn-glycero-3-phospho-(1D-myo-inositol) + phosphate. It functions in the pathway phospholipid metabolism; phosphatidylglycerol biosynthesis; phosphatidylglycerol from CDP-diacylglycerol: step 2/2. Functionally, lipid phosphatase which dephosphorylates phosphatidylglycerophosphate (PGP) to phosphatidylglycerol (PG). PGP is an essential intermediate in the biosynthetic pathway of cardiolipin, a mitochondrial-specific phospholipid regulating the membrane integrity and activities of the organelle. Has also been shown to display phosphatase activity toward phosphoprotein substrates, specifically mediates dephosphorylation of mitochondrial proteins, thereby playing an essential role in ATP production. Has probably a preference for proteins phosphorylated on Ser and/or Thr residues compared to proteins phosphorylated on Tyr residues. Probably involved in regulation of insulin secretion in pancreatic beta cells. May prevent intrinsic apoptosis, probably by regulating mitochondrial membrane integrity. The sequence is that of Phosphatidylglycerophosphatase and protein-tyrosine phosphatase 1 from Homo sapiens (Human).